Consider the following 428-residue polypeptide: Palmitoyltransferase ZDHHC23-B (428 aa).

Residues 1-82 lie on the Cytoplasmic side of the membrane; it reads MSIMKKRSSR…RVPWISGARQ (82 aa). Residues 83–99 form a helical membrane-spanning segment; sequence IDVSLIPPLILLPVFLH. Residues 100 to 105 are Lumenal-facing; sequence IAALHY. The helical transmembrane segment at 106 to 125 threads the bilayer; it reads LLGIIMLTAMPITVLWYYFF. The Cytoplasmic segment spans residues 126-132; it reads THRKKGR. The helical transmembrane segment at 133 to 153 threads the bilayer; sequence TLFFLGLALFSLFYMFYLFLT. Over 154–160 the chain is Lumenal; it reads QVVPRGE. A helical membrane pass occupies residues 161–181; sequence VTELQLAVVTAGVALTVIFLM. Residues 182–294 are Cytoplasmic-facing; the sequence is LTKRGPGLVR…SCVGLANHRT (113 aa). Positions 250–300 constitute a DHHC domain; the sequence is NWCAVCKVVRPQRAGHCRICGVCVLRLDHHCVWINSCVGLANHRTFLLTLL. Cys-280 functions as the S-palmitoyl cysteine intermediate in the catalytic mechanism. The helical transmembrane segment at 295-315 threads the bilayer; sequence FLLTLLFFLLTSIYGISLVLA. Over 316-350 the chain is Lumenal; it reads SVCPDQRVLTALFYCPDVYSQYSSALCFTCAWYSS. Residues 351–371 form a helical membrane-spanning segment; sequence IVTGGLLHLLLLQILNISLNV. The Cytoplasmic portion of the chain corresponds to 372-428; that stretch reads TEREARLALREKSAQRRLWGLIVHTGHYSRGFWSNWTEFLTMTEDTQPAGHKTEDLV.

It belongs to the DHHC palmitoyltransferase family.

The protein localises to the golgi apparatus membrane. It is found in the golgi apparatus. It localises to the trans-Golgi network membrane. It carries out the reaction L-cysteinyl-[protein] + hexadecanoyl-CoA = S-hexadecanoyl-L-cysteinyl-[protein] + CoA. Palmitoyltransferase that could catalyze the addition of palmitate onto various protein substrates and be involved in a variety of cellular processes. This is Palmitoyltransferase ZDHHC23-B from Danio rerio (Zebrafish).